A 944-amino-acid polypeptide reads, in one-letter code: Nonsense-mediated mRNA decay factor SMG8 (944 aa).

Disordered regions lie at residues 560–597 (NTGK…QNTA) and 628–653 (QASS…DTEN). A compositionally biased stretch (acidic residues) spans 568–583 (QDEDAGEDEAEEEEGQ). Residues 628–650 (QASSEQLSNSEQNTTSSGTSSAD) are compositionally biased toward polar residues.

This sequence belongs to the SMG8 family.

Its function is as follows. Involved in nonsense-mediated decay (NMD) of mRNAs containing premature stop codons. Probable component of kinase complex containing nonC and recruited to stalled ribosomes. The protein is Nonsense-mediated mRNA decay factor SMG8 of Drosophila simulans (Fruit fly).